Consider the following 243-residue polypeptide: Ubiquinone/menaquinone biosynthesis C-methyltransferase UbiE (243 aa).

Residues threonine 69, aspartate 90, and 116-117 (DA) contribute to the S-adenosyl-L-methionine site.

Belongs to the class I-like SAM-binding methyltransferase superfamily. MenG/UbiE family.

The enzyme catalyses a 2-demethylmenaquinol + S-adenosyl-L-methionine = a menaquinol + S-adenosyl-L-homocysteine + H(+). The catalysed reaction is a 2-methoxy-6-(all-trans-polyprenyl)benzene-1,4-diol + S-adenosyl-L-methionine = a 5-methoxy-2-methyl-3-(all-trans-polyprenyl)benzene-1,4-diol + S-adenosyl-L-homocysteine + H(+). Its pathway is quinol/quinone metabolism; menaquinone biosynthesis; menaquinol from 1,4-dihydroxy-2-naphthoate: step 2/2. It participates in cofactor biosynthesis; ubiquinone biosynthesis. Its function is as follows. Methyltransferase required for the conversion of demethylmenaquinol (DMKH2) to menaquinol (MKH2) and the conversion of 2-polyprenyl-6-methoxy-1,4-benzoquinol (DDMQH2) to 2-polyprenyl-3-methyl-6-methoxy-1,4-benzoquinol (DMQH2). The protein is Ubiquinone/menaquinone biosynthesis C-methyltransferase UbiE of Paraburkholderia phytofirmans (strain DSM 17436 / LMG 22146 / PsJN) (Burkholderia phytofirmans).